The following is a 221-amino-acid chain: Putative hemin import ATP-binding protein HrtA (221 aa).

Residues 3–221 (LVVEDIVKNF…IELEDGKITD (219 aa)) form the ABC transporter domain. Residue 39-46 (GASGSGKT) participates in ATP binding.

This sequence belongs to the ABC transporter superfamily. HrtA family. As to quaternary structure, the complex is composed of two ATP-binding proteins (HrtA), two transmembrane proteins (HrtB) and a solute-binding protein.

It is found in the cell membrane. Its function is as follows. Part of the ABC transporter complex hrt involved in hemin import. Responsible for energy coupling to the transport system. The protein is Putative hemin import ATP-binding protein HrtA (hrtA) of Staphylococcus aureus (strain USA300).